The following is a 283-amino-acid chain: Probable protein phosphatase 2C 17 (283 aa).

Positions 32-282 (KYGFSLIKGK…DDISCIVVRF (251 aa)) constitute a PPM-type phosphatase domain. Mn(2+)-binding residues include D69, G70, D234, and D273.

The protein belongs to the PP2C family. The cofactor is Mg(2+). Requires Mn(2+) as cofactor.

The catalysed reaction is O-phospho-L-seryl-[protein] + H2O = L-seryl-[protein] + phosphate. The enzyme catalyses O-phospho-L-threonyl-[protein] + H2O = L-threonyl-[protein] + phosphate. The sequence is that of Probable protein phosphatase 2C 17 from Arabidopsis thaliana (Mouse-ear cress).